Consider the following 1191-residue polypeptide: Protogenin (1191 aa).

The N-terminal stretch at 1 to 23 (MAPPVRPGMLPLLLLLLLPPLGS) is a signal peptide. 4 Ig-like domains span residues 24–124 (VPGV…AHLT), 126–216 (STIS…ASLT), 229–316 (PTII…ATLT), and 321–405 (PSFV…ARLT). Residues 24–943 (VPGVWSFSEL…YYHLDQKSMT (920 aa)) lie on the Extracellular side of the membrane. Disulfide bonds link Cys-54/Cys-107 and Cys-150/Cys-199. A glycan (N-linked (GlcNAc...) asparagine) is linked at Asn-237. Disulfide bonds link Cys-250–Cys-298 and Cys-342–Cys-389. 5 consecutive Fibronectin type-III domains span residues 415–509 (APYN…TLED), 511–607 (PLRP…TPKA), 612–711 (APKS…VRDR), 718–811 (PPHH…TLPE), and 816–911 (PPVG…VLPK). An N-linked (GlcNAc...) asparagine glycan is attached at Asn-624. A helical transmembrane segment spans residues 944–964 (GIAVGVGIALTCILICVLILI). At 965-1191 (YRSKARKSSA…LRYAAEGFPV (227 aa)) the chain is on the cytoplasmic side. Disordered stretches follow at residues 975–1010 (SKTA…ETAE) and 1079–1191 (ISDE…GFPV). The segment covering 977–990 (TAQSGTQPLSQASA) has biased composition (polar residues). Positions 1104-1132 (DTEHSANSEGSHETGDSGRFSHESNDEIH) are enriched in basic and acidic residues. Composition is skewed to polar residues over residues 1135–1146 (SVISSTPPTSNP) and 1171–1180 (EQTSAPQTSA).

It belongs to the immunoglobulin superfamily. DCC family. As to expression, from mid-gastrulation to early somite stages, restricted to posterior neural plate and mesoderm with an anterior limit at the level of the rhombencephalon. Posterior restriction is progressively lost during somitogenesis. Expression is maintained in the neural tube and paraxial mesoderm during this process. As development proceeds, further restricted to the dorsal parts of the spinal cord and somites. In parallel, expression progresses caudally during axis elongation.

Its subcellular location is the membrane. In terms of biological role, may play a role in anteroposterior axis elongation. The polypeptide is Protogenin (Mus musculus (Mouse)).